Here is a 154-residue protein sequence, read N- to C-terminus: Transcriptional repressor NrdR (154 aa).

A disordered region spans residues 1–22; the sequence is MRCPFCAHDDSQVKDSRPTDDG. A zinc finger spans residues 3–34; that stretch reads CPFCAHDDSQVKDSRPTDDGAAIRRRRQCEGC. The segment covering 7–22 has biased composition (basic and acidic residues); sequence AHDDSQVKDSRPTDDG. Residues 49-139 enclose the ATP-cone domain; sequence MTVVKSDGRR…VYKDFREAKD (91 aa).

It belongs to the NrdR family. Requires Zn(2+) as cofactor.

In terms of biological role, negatively regulates transcription of bacterial ribonucleotide reductase nrd genes and operons by binding to NrdR-boxes. This chain is Transcriptional repressor NrdR, found in Rhizorhabdus wittichii (strain DSM 6014 / CCUG 31198 / JCM 15750 / NBRC 105917 / EY 4224 / RW1) (Sphingomonas wittichii).